Here is a 461-residue protein sequence, read N- to C-terminus: UDP-glucose 6-dehydrogenase TuaD (461 aa).

NAD(+) is bound by residues 3-20 (KIAVIGTGYVGLVSGTCF), Val12, Asp31, Lys36, Thr122, and Glu156. Residues 152–156 (EFLRE), Lys205, Asn209, 250–254 (FLKAG), and Gly258 contribute to the substrate site. The active-site Nucleophile is the Cys261. Lys264 is a binding site for NAD(+). Lys321 contacts substrate. Arg328 serves as a coordination point for NAD(+).

This sequence belongs to the UDP-glucose/GDP-mannose dehydrogenase family. Phosphorylated by YwqD and dephosphorylated by YwqE in vitro.

It localises to the cytoplasm. The enzyme catalyses UDP-alpha-D-glucose + 2 NAD(+) + H2O = UDP-alpha-D-glucuronate + 2 NADH + 3 H(+). Its pathway is nucleotide-sugar biosynthesis; UDP-alpha-D-glucuronate biosynthesis; UDP-alpha-D-glucuronate from UDP-alpha-D-glucose: step 1/1. Activated by phosphorylation; inhibited by dephosphorylation. In terms of biological role, catalyzes the conversion of UDP-glucose into UDP-glucuronate, one of the precursors of teichuronic acid. The polypeptide is UDP-glucose 6-dehydrogenase TuaD (tuaD) (Bacillus subtilis (strain 168)).